We begin with the raw amino-acid sequence, 531 residues long: 2-isopropylmalate synthase (531 aa).

The 277-residue stretch at 8–284 (IIIFDTTLRD…LTNIDTKQIY (277 aa)) folds into the Pyruvate carboxyltransferase domain. Mn(2+)-binding residues include aspartate 17, histidine 208, histidine 210, and asparagine 244. The segment at 408–531 (RVELVQVSCG…TQDKQTEVTA (124 aa)) is regulatory domain.

The protein belongs to the alpha-IPM synthase/homocitrate synthase family. LeuA type 1 subfamily. Homodimer. It depends on Mn(2+) as a cofactor.

It localises to the cytoplasm. It catalyses the reaction 3-methyl-2-oxobutanoate + acetyl-CoA + H2O = (2S)-2-isopropylmalate + CoA + H(+). Its pathway is amino-acid biosynthesis; L-leucine biosynthesis; L-leucine from 3-methyl-2-oxobutanoate: step 1/4. In terms of biological role, catalyzes the condensation of the acetyl group of acetyl-CoA with 3-methyl-2-oxobutanoate (2-ketoisovalerate) to form 3-carboxy-3-hydroxy-4-methylpentanoate (2-isopropylmalate). The polypeptide is 2-isopropylmalate synthase (Nostoc sp. (strain PCC 7120 / SAG 25.82 / UTEX 2576)).